The primary structure comprises 861 residues: Leucine--tRNA ligase (861 aa).

Residues 42-52 (PYPSGRIHMGH) carry the 'HIGH' region motif. Positions 623–627 (KMSKS) match the 'KMSKS' region motif. Lys-626 contributes to the ATP binding site.

Belongs to the class-I aminoacyl-tRNA synthetase family.

The protein resides in the cytoplasm. It carries out the reaction tRNA(Leu) + L-leucine + ATP = L-leucyl-tRNA(Leu) + AMP + diphosphate. The protein is Leucine--tRNA ligase of Caulobacter vibrioides (strain ATCC 19089 / CIP 103742 / CB 15) (Caulobacter crescentus).